The chain runs to 735 residues: Funoran endo-beta-hydrolase (735 aa).

An N-terminal signal peptide occupies residues 1–27; it reads MRVKSVYKKLSVSFILVMLSASQEVNS. E200 functions as the Proton donor in the catalytic mechanism. Residue E322 is the Nucleophile of the active site.

Belongs to the glycosyl hydrolase 86 family.

The catalysed reaction is Endohydrolysis of beta-(1-&gt;4)-linkages between beta-D-galactopyranose-6-sulfate and 3,6-anhydro-alpha-L-galactopyranose units in funoran.. It catalyses the reaction Hydrolysis of (1-&gt;4)-beta-D-galactosidic linkages in agarose, giving the tetramer as the predominant product.. With respect to regulation, agarase activity is enhanced in the presence of NaCl. Agarase activity is significantly inhibited by Zn(2+) and slightly activated by several divalent ions including Mg(2+), Cd(2+) and Ca(2+). Its function is as follows. Endohydrolase that cleaves the beta-1,4 glycosidic bond between beta-D-galactopyranose-6-sulfate (G6S) and 3,6-anhydro-alpha-L-galactopyranose (LA) unit of funoran, a polysaccharide produced by red algae of the genus Gloiopeltis. It releases the disaccharide LA-G6S as the predominant end product. Also acts as a random endo-acting beta-agarase, which can hydrolyze agarose tetrasaccharides and hexasaccharides, and produces disaccharides as smallest products. Besides typical agarose oligosaccharides, it can use methylated galactoses. The enzyme exhibits higher catalytic efficiency towards agarose, but binds funoran preferentially. Has no activity on porphyran. The sequence is that of Funoran endo-beta-hydrolase from Wenyingzhuangia aestuarii.